The sequence spans 428 residues: Gamma-glutamyl phosphate reductase (428 aa).

The protein belongs to the gamma-glutamyl phosphate reductase family.

The protein resides in the cytoplasm. It carries out the reaction L-glutamate 5-semialdehyde + phosphate + NADP(+) = L-glutamyl 5-phosphate + NADPH + H(+). It participates in amino-acid biosynthesis; L-proline biosynthesis; L-glutamate 5-semialdehyde from L-glutamate: step 2/2. In terms of biological role, catalyzes the NADPH-dependent reduction of L-glutamate 5-phosphate into L-glutamate 5-semialdehyde and phosphate. The product spontaneously undergoes cyclization to form 1-pyrroline-5-carboxylate. This is Gamma-glutamyl phosphate reductase from Agrobacterium fabrum (strain C58 / ATCC 33970) (Agrobacterium tumefaciens (strain C58)).